Consider the following 117-residue polypeptide: Small ribosomal subunit protein bS6 (117 aa).

A disordered region spans residues 92–117 (KVDEHPEGPSIQMQKREERDNRRERR). The segment covering 105–117 (QKREERDNRRERR) has biased composition (basic and acidic residues).

This sequence belongs to the bacterial ribosomal protein bS6 family.

Binds together with bS18 to 16S ribosomal RNA. The chain is Small ribosomal subunit protein bS6 from Dinoroseobacter shibae (strain DSM 16493 / NCIMB 14021 / DFL 12).